Consider the following 622-residue polypeptide: Ferredoxin-fold anticodon-binding domain-containing protein 1 homolog (622 aa).

Residues 529-622 enclose the FDX-ACB domain; that stretch reads LYPPCYVHDV…IQRQLHVSPR (94 aa).

The chain is Ferredoxin-fold anticodon-binding domain-containing protein 1 homolog (Fdxacb1) from Mus musculus (Mouse).